Reading from the N-terminus, the 458-residue chain is 3-isopropylmalate dehydratase large subunit (458 aa).

3 residues coordinate [4Fe-4S] cluster: C339, C399, and C402.

Belongs to the aconitase/IPM isomerase family. LeuC type 1 subfamily. As to quaternary structure, heterodimer of LeuC and LeuD. [4Fe-4S] cluster is required as a cofactor.

It carries out the reaction (2R,3S)-3-isopropylmalate = (2S)-2-isopropylmalate. The protein operates within amino-acid biosynthesis; L-leucine biosynthesis; L-leucine from 3-methyl-2-oxobutanoate: step 2/4. Catalyzes the isomerization between 2-isopropylmalate and 3-isopropylmalate, via the formation of 2-isopropylmaleate. The chain is 3-isopropylmalate dehydratase large subunit from Lactococcus lactis subsp. cremoris (strain MG1363).